The sequence spans 192 residues: HTH-type transcriptional regulator Hpr (192 aa).

Residues 12–156 (SIIFSHKFAQ…LLSIVRHVYG (145 aa)) form the HTH marR-type domain. The H-T-H motif DNA-binding region spans 62-85 (ISDIAKFGVMHVSTAFNFSKKLEE).

Homodimer.

In terms of biological role, negative regulator of protease production and sporulation. The chain is HTH-type transcriptional regulator Hpr from Halalkalibacterium halodurans (strain ATCC BAA-125 / DSM 18197 / FERM 7344 / JCM 9153 / C-125) (Bacillus halodurans).